Here is a 355-residue protein sequence, read N- to C-terminus: 3-isopropylmalate dehydrogenase (355 aa).

Arginine 98, arginine 108, arginine 132, and aspartate 223 together coordinate substrate. Residues aspartate 223, aspartate 247, and aspartate 251 each coordinate Mg(2+). Residue 283 to 295 coordinates NAD(+); it reads GSAPDIAGQQKAD.

Belongs to the isocitrate and isopropylmalate dehydrogenases family. LeuB type 2 subfamily. Homodimer. The cofactor is Mg(2+). It depends on Mn(2+) as a cofactor.

The protein localises to the cytoplasm. It carries out the reaction (2R,3S)-3-isopropylmalate + NAD(+) = 4-methyl-2-oxopentanoate + CO2 + NADH. The protein operates within amino-acid biosynthesis; L-leucine biosynthesis; L-leucine from 3-methyl-2-oxobutanoate: step 3/4. Its function is as follows. Catalyzes the oxidation of 3-carboxy-2-hydroxy-4-methylpentanoate (3-isopropylmalate) to 3-carboxy-4-methyl-2-oxopentanoate. The product decarboxylates to 4-methyl-2 oxopentanoate. The protein is 3-isopropylmalate dehydrogenase of Clavibacter michiganensis subsp. michiganensis (strain NCPPB 382).